A 300-amino-acid chain; its full sequence is Hydroxyquinol 1,2-dioxygenase (300 aa).

Fe cation is bound by residues Tyr-167, Tyr-200, His-224, and His-226.

Belongs to the intradiol ring-cleavage dioxygenase family. Fe(3+) serves as cofactor.

It carries out the reaction benzene-1,2,4-triol + O2 = maleylacetate + 2 H(+). It participates in aromatic compound metabolism. Its pathway is xenobiotic degradation. Its function is as follows. Involved in the degradation of para-nitrophenol (4-NP). Catalyzes the conversion of hydroxyquinol to malelylacetate. The sequence is that of Hydroxyquinol 1,2-dioxygenase (npcC) from Rhodococcus opacus (Nocardia opaca).